The following is a 416-amino-acid chain: UDP-N-acetylglucosamine 1-carboxyvinyltransferase (416 aa).

22 to 23 provides a ligand contact to phosphoenolpyruvate; it reads KN. Arg92 serves as a coordination point for UDP-N-acetyl-alpha-D-glucosamine. Catalysis depends on Cys116, which acts as the Proton donor. 2-(S-cysteinyl)pyruvic acid O-phosphothioketal is present on Cys116. Residues 121 to 125, Asp304, and Ile326 each bind UDP-N-acetyl-alpha-D-glucosamine; that span reads RPVDQ.

This sequence belongs to the EPSP synthase family. MurA subfamily.

Its subcellular location is the cytoplasm. It catalyses the reaction phosphoenolpyruvate + UDP-N-acetyl-alpha-D-glucosamine = UDP-N-acetyl-3-O-(1-carboxyvinyl)-alpha-D-glucosamine + phosphate. It functions in the pathway cell wall biogenesis; peptidoglycan biosynthesis. In terms of biological role, cell wall formation. Adds enolpyruvyl to UDP-N-acetylglucosamine. This is UDP-N-acetylglucosamine 1-carboxyvinyltransferase from Aromatoleum aromaticum (strain DSM 19018 / LMG 30748 / EbN1) (Azoarcus sp. (strain EbN1)).